A 164-amino-acid polypeptide reads, in one-letter code: Cyanate hydratase (164 aa).

Catalysis depends on residues Arg104, Glu107, and Ser130.

The protein belongs to the cyanase family.

The enzyme catalyses cyanate + hydrogencarbonate + 3 H(+) = NH4(+) + 2 CO2. Catalyzes the reaction of cyanate with bicarbonate to produce ammonia and carbon dioxide. This Botryotinia fuckeliana (strain B05.10) (Noble rot fungus) protein is Cyanate hydratase.